The following is a 459-amino-acid chain: MTAANKNIVFGFSRSISAILLICFFFEKVCGDMEHDMGMDDTSGYTRPEIVQAGSKSFHWLCTLGFLLLLPSVVTCLSFAGRIYSATLLQCTCAVYAFLEAAVLRFQDNDGVENRTSRGTAWFLVGLTWITLFFGGLAGGTGFLVKSKRLQTFISNAGEKRLSYIHRGLSFLTVLTGWVKVCLAPVALFGFCREAHTGQCIAHGIMGSAFVLYGFIYVLVLVIPWIRSAQTSYSQDYVDSWVMCIWGVVNTFTEHRWGREGWSVHDYQHTFMGIIWWTGGILGIFLSRNGRRTFVPSLIIIFTGWAMSEHAQHLIISTKVHNMFGLVLMCGGALRIIEISFLLRDKRTLDKIHSFQYLAPFCLVCSGLLFMGANEEQLILVLRLGGDHSAYVLIIVSGAFLVYFWMIACLEFYLYLLEKGKQGFLPKSYELEEENNNVSFELDNISNEDVDEDTTPFNV.

Residues 1–6 (MTAANK) lie on the Extracellular side of the membrane. The chain crosses the membrane as a helical span at residues 7–27 (NIVFGFSRSISAILLICFFFE). Residues 28 to 59 (KVCGDMEHDMGMDDTSGYTRPEIVQAGSKSFH) lie on the Cytoplasmic side of the membrane. Residues 60 to 80 (WLCTLGFLLLLPSVVTCLSFA) traverse the membrane as a helical segment. The Extracellular segment spans residues 81-82 (GR). Residues 83–103 (IYSATLLQCTCAVYAFLEAAV) traverse the membrane as a helical segment. Residues 104-122 (LRFQDNDGVENRTSRGTAW) lie on the Cytoplasmic side of the membrane. A helical transmembrane segment spans residues 123 to 143 (FLVGLTWITLFFGGLAGGTGF). The Extracellular segment spans residues 144-170 (LVKSKRLQTFISNAGEKRLSYIHRGLS). The helical transmembrane segment at 171-191 (FLTVLTGWVKVCLAPVALFGF) threads the bilayer. Residues 192 to 205 (CREAHTGQCIAHGI) lie on the Cytoplasmic side of the membrane. A helical transmembrane segment spans residues 206–226 (MGSAFVLYGFIYVLVLVIPWI). The Extracellular segment spans residues 227–266 (RSAQTSYSQDYVDSWVMCIWGVVNTFTEHRWGREGWSVHD). A helical membrane pass occupies residues 267 to 287 (YQHTFMGIIWWTGGILGIFLS). The Cytoplasmic portion of the chain corresponds to 288–295 (RNGRRTFV). The helical transmembrane segment at 296–316 (PSLIIIFTGWAMSEHAQHLII) threads the bilayer. The Extracellular segment spans residues 317-322 (STKVHN). A helical transmembrane segment spans residues 323 to 343 (MFGLVLMCGGALRIIEISFLL). Topologically, residues 344–351 (RDKRTLDK) are cytoplasmic. The chain crosses the membrane as a helical span at residues 352 to 372 (IHSFQYLAPFCLVCSGLLFMG). Over 373-389 (ANEEQLILVLRLGGDHS) the chain is Extracellular. A helical membrane pass occupies residues 390-410 (AYVLIIVSGAFLVYFWMIACL). Over 411-459 (EFYLYLLEKGKQGFLPKSYELEEENNNVSFELDNISNEDVDEDTTPFNV) the chain is Cytoplasmic.

The protein resides in the membrane. The protein is Protein YTP1 (YTP1) of Saccharomyces cerevisiae (strain ATCC 204508 / S288c) (Baker's yeast).